The following is a 151-amino-acid chain: UPF0208 membrane protein CKO_00500 (151 aa).

A run of 2 helical transmembrane segments spans residues 46–65 (YAIR…QIAL) and 69–91 (LGPA…WWLG).

Belongs to the UPF0208 family.

It is found in the cell inner membrane. This Citrobacter koseri (strain ATCC BAA-895 / CDC 4225-83 / SGSC4696) protein is UPF0208 membrane protein CKO_00500.